Consider the following 873-residue polypeptide: Leucine--tRNA ligase (873 aa).

The 'HIGH' region motif lies at 48 to 58 (PYPSGKLHMGH). The 'KMSKS' region signature appears at 636–640 (KMSKS). An ATP-binding site is contributed by lysine 639.

This sequence belongs to the class-I aminoacyl-tRNA synthetase family.

The protein resides in the cytoplasm. It catalyses the reaction tRNA(Leu) + L-leucine + ATP = L-leucyl-tRNA(Leu) + AMP + diphosphate. This chain is Leucine--tRNA ligase, found in Cupriavidus metallidurans (strain ATCC 43123 / DSM 2839 / NBRC 102507 / CH34) (Ralstonia metallidurans).